The chain runs to 117 residues: Large ribosomal subunit protein bL19 (117 aa).

This sequence belongs to the bacterial ribosomal protein bL19 family.

This protein is located at the 30S-50S ribosomal subunit interface and may play a role in the structure and function of the aminoacyl-tRNA binding site. The polypeptide is Large ribosomal subunit protein bL19 (Shewanella frigidimarina (strain NCIMB 400)).